Here is a 129-residue protein sequence, read N- to C-terminus: uncharacterized protein (129 aa).

Positions 1–27 are cleaved as a signal peptide; that stretch reads MLMRKKKLLSRISFGSLFLLCGTILSA. Cys28 carries the N-palmitoyl cysteine lipid modification. Cys28 carries S-diacylglycerol cysteine lipidation.

The protein belongs to the MG439/MG440 family.

The protein localises to the cell membrane. This is an uncharacterized protein from Mycoplasma pneumoniae (strain ATCC 29342 / M129 / Subtype 1) (Mycoplasmoides pneumoniae).